The primary structure comprises 163 residues: 3-hydroxyacyl-[acyl-carrier-protein] dehydratase FabZ (163 aa).

The active site involves histidine 58.

Belongs to the thioester dehydratase family. FabZ subfamily.

The protein localises to the cytoplasm. It carries out the reaction a (3R)-hydroxyacyl-[ACP] = a (2E)-enoyl-[ACP] + H2O. Involved in unsaturated fatty acids biosynthesis. Catalyzes the dehydration of short chain beta-hydroxyacyl-ACPs and long chain saturated and unsaturated beta-hydroxyacyl-ACPs. In Francisella tularensis subsp. tularensis (strain FSC 198), this protein is 3-hydroxyacyl-[acyl-carrier-protein] dehydratase FabZ.